A 494-amino-acid polypeptide reads, in one-letter code: Putative transporter SVOPL (494 aa).

Helical transmembrane passes span Ile48–Ile68, Val86–Leu106, Phe121–Val141, Val179–Ile199, Trp203–Pro223, Thr281–Ala301, Ile350–Leu370, Leu385–Met405, Ala431–Ile451, and Phe460–Thr480.

The protein belongs to the major facilitator superfamily.

It is found in the membrane. The sequence is that of Putative transporter SVOPL (Svopl) from Mus musculus (Mouse).